Reading from the N-terminus, the 335-residue chain is Methionine import ATP-binding protein MetN (335 aa).

The region spanning 2–241 is the ABC transporter domain; sequence IQFQRLHKSY…PQHPTTRRFV (240 aa). An ATP-binding site is contributed by 38 to 45; that stretch reads GHSGAGKS.

It belongs to the ABC transporter superfamily. Methionine importer (TC 3.A.1.24) family. In terms of assembly, the complex is composed of two ATP-binding proteins (MetN), two transmembrane proteins (MetI) and a solute-binding protein (MetQ).

The protein localises to the cell inner membrane. The enzyme catalyses L-methionine(out) + ATP + H2O = L-methionine(in) + ADP + phosphate + H(+). It carries out the reaction D-methionine(out) + ATP + H2O = D-methionine(in) + ADP + phosphate + H(+). In terms of biological role, part of the ABC transporter complex MetNIQ involved in methionine import. Responsible for energy coupling to the transport system. The sequence is that of Methionine import ATP-binding protein MetN from Xanthomonas campestris pv. campestris (strain 8004).